A 579-amino-acid chain; its full sequence is Tetratricopeptide repeat protein 39C (579 aa).

The segment covering 182 to 197 (QQGALASDQANHNTST) has biased composition (polar residues). The tract at residues 182–202 (QQGALASDQANHNTSTGSGGR) is disordered. 3 TPR repeats span residues 311 to 344 (SLFI…ASDQ), 349 to 382 (HVCL…SRWS), and 481 to 514 (GLKH…EYGR).

The protein belongs to the TTC39 family.

This is Tetratricopeptide repeat protein 39C (ttc39c) from Danio rerio (Zebrafish).